Consider the following 591-residue polypeptide: Peroxisome assembly protein 2 (591 aa).

Residues 1–78 (MSDSDPKPTA…TNIDTNNNTN (78 aa)) form a disordered region. At 1–148 (MSDSDPKPTA…TSREGTRPAF (148 aa)) the chain is on the peroxisomal matrix side. Low complexity predominate over residues 7–26 (KPTAAKGAAPTSIPNSTRNP). A compositionally biased stretch (pro residues) spans 27 to 54 (NPTPPNPNPNPNPISTPAPTPTATPSPP). Positions 55-78 (IASSSNNGNNSTRSTNIDTNNNTN) are enriched in low complexity. A helical membrane pass occupies residues 149 to 175 (RVGQVDAELLDEELVELLRGQVREALR). Topologically, residues 176 to 196 (YVGGGGGGGGGGGGGGVGSGV) are cytoplasmic. The helical transmembrane segment at 197-222 (AQDWEAEISLALRAVLFKLTVWDHDA) threads the bilayer. Topologically, residues 223-246 (TYGAALQNLKYTDARRDGPALAPP) are peroxisomal matrix. The chain crosses the membrane as a helical span at residues 247–273 (SRWQKALYGLVTVGGRYLWAKWEDWLL). At 274–283 (EQDDGFEGPS) the chain is on the cytoplasmic side. Residues 284-314 (PRVKRLARWTSALSTLHASAALVSFLVFLLH) traverse the membrane as a helical segment. Over 315 to 341 (GRYRTLLDRLLRMRLAPPTSQVSREVS) the chain is Peroxisomal matrix. A helical transmembrane segment spans residues 342–365 (FEYLNRQLVWHAFTEFLLFVLPLV). The Cytoplasmic portion of the chain corresponds to 366 to 591 (GINRWRRWLA…EDGLDEDPES (226 aa)). Residues cysteine 408, cysteine 411, cysteine 449, cysteine 451, cysteine 454, cysteine 457, cysteine 472, and cysteine 475 each contribute to the Zn(2+) site. The segment at 408-475 (CAICYRDQNS…EGEGWPCLRC (68 aa)) adopts an RING-type; atypical zinc-finger fold. The tract at residues 512-591 (KAPSDHEEEE…EDGLDEDPES (80 aa)) is disordered. Composition is skewed to acidic residues over residues 517–537 (HEEE…ENEG) and 575–591 (SEDY…DPES).

This sequence belongs to the pex2/pex10/pex12 family. Component of the PEX2-PEX10-PEX12 retrotranslocation channel, composed of PEX2, PEX10 and PEX12.

The protein localises to the peroxisome membrane. The enzyme catalyses [E2 ubiquitin-conjugating enzyme]-S-ubiquitinyl-L-cysteine + [acceptor protein]-L-cysteine = [E2 ubiquitin-conjugating enzyme]-L-cysteine + [acceptor protein]-S-ubiquitinyl-L-cysteine.. Its pathway is protein modification; protein ubiquitination. In terms of biological role, E3 ubiquitin-protein ligase component of a retrotranslocation channel required for peroxisome organization by mediating export of the PEX5 receptor from peroxisomes to the cytosol, thereby promoting PEX5 recycling. The retrotranslocation channel is composed of PEX2, PEX10 and PEX12; each subunit contributing transmembrane segments that coassemble into an open channel that specifically allows the passage of PEX5 through the peroxisomal membrane. PEX2 also regulates peroxisome organization by acting as a E3 ubiquitin-protein ligase. PEX2 ubiquitinates PEX5 during its passage through the retrotranslocation channel: catalyzes monoubiquitination of PEX5 at 'Cys-6', a modification that acts as a signal for PEX5 extraction into the cytosol. The polypeptide is Peroxisome assembly protein 2 (Thermothelomyces thermophilus (strain ATCC 42464 / BCRC 31852 / DSM 1799) (Sporotrichum thermophile)).